Reading from the N-terminus, the 624-residue chain is ERAD-associated E3 ubiquitin-protein ligase ASI1 (624 aa).

Topologically, residues 1 to 69 (MNSSTSSENV…SEEIPPTLRS (69 aa)) are perinuclear space. Residues N2, N19, and N29 are each glycosylated (N-linked (GlcNAc...) asparagine). Residues 70–90 (VFDTIGFFFSPYAIFCFVIAI) form a helical membrane-spanning segment. The Nuclear segment spans residues 91 to 116 (VLNRFVVFYAVLNNGSRRTLPLWLSN). Residues 117–137 (VFHVSAVVVLAMVSLGPLTLG) traverse the membrane as a helical segment. Over 138 to 152 (KDFKILGDPAFAQEK) the chain is Perinuclear space. A helical membrane pass occupies residues 153 to 173 (FLLNIFYAFAYSYCVETIFTI). Residues 174–209 (MRNSSPLEGTDYSLFELSIQFYTMTNNNTKFLDSPD) lie on the Nuclear side of the membrane. Residues 210–230 (YIIDCSMAILSRILIHLVEIF) form a helical membrane-spanning segment. The Perinuclear space segment spans residues 231–273 (RLRNYRLLFSTIMNLCHICYLGIRVKQGGWKSLPFSVKFRHFP). A helical membrane pass occupies residues 274 to 294 (KLFSVSIICLSLLIFKLSCLI). At 295 to 624 (RWDPFGKSRN…CKVHPVSDSK (330 aa)) the chain is on the nuclear side. Residues 467–490 (TSDDEYSEDYEPSEVESLGDSDEE) form a disordered region. Acidic residues predominate over residues 468-490 (SDDEYSEDYEPSEVESLGDSDEE). The RING-type; atypical zinc finger occupies 568 to 608 (CAVCKVNERNTVLWPCRCFAICEDCRISLGLRGFSTCVCCR).

In terms of assembly, component of the Asi complex, which contains ASI1, ASI2 and ASI3. Interacts directly with ASI3. In terms of processing, glycosylation is not required for ASI1 function.

The protein resides in the nucleus inner membrane. The catalysed reaction is S-ubiquitinyl-[E2 ubiquitin-conjugating enzyme]-L-cysteine + [acceptor protein]-L-lysine = [E2 ubiquitin-conjugating enzyme]-L-cysteine + N(6)-ubiquitinyl-[acceptor protein]-L-lysine.. In terms of biological role, E3 ubiquitin-protein ligase which transfers ubiquitin to substrates promoting their degradation. Part of the nuclear inner membrane (INM)-specific branch of the ER-associated degradation (ERAD) pathway, required for the elimination of misfolded proteins in the INM, a specialized ER subdomain. Required for ERG11 degradation. Negative regulator of SPS-sensor signaling. Together with ASI2 and ASI3, prevents the unprocessed precursor forms of STP1 and STP2 that escape cytoplasmic anchoring from inducing SPS-sensor-regulated genes in the absence of inducing signals. Controls amino acid permease (AAP) gene expression in response to amino acid availability, a process mediated by the transcription factors STP1 and STP1. This is ERAD-associated E3 ubiquitin-protein ligase ASI1 (ASI1) from Saccharomyces cerevisiae (strain ATCC 204508 / S288c) (Baker's yeast).